A 472-amino-acid polypeptide reads, in one-letter code: uncharacterized protein (472 aa).

2 stretches are compositionally biased toward low complexity: residues 1–21 (MAFSSSSLRRSLKLGRGSRPG) and 63–74 (ASSLPAPASSSP). Residues 1–74 (MAFSSSSLRR…SLPAPASSSP (74 aa)) are disordered.

This is an uncharacterized protein from Equus caballus (Horse).